Consider the following 709-residue polypeptide: Polyribonucleotide nucleotidyltransferase (709 aa).

Positions 485 and 491 each coordinate Mg(2+). The KH domain maps to 552–611 (PRIHTMKIDPKKIKDVIGKGGATIRALTEETGTSIDIDDDGTVKIAATDNNAAKRVMERI). The S1 motif domain occupies 621–689 (NAIYKGKVTR…RQGRIRLTMK (69 aa)).

It belongs to the polyribonucleotide nucleotidyltransferase family. In terms of assembly, component of the RNA degradosome, which is a multiprotein complex involved in RNA processing and mRNA degradation. It depends on Mg(2+) as a cofactor.

Its subcellular location is the cytoplasm. The enzyme catalyses RNA(n+1) + phosphate = RNA(n) + a ribonucleoside 5'-diphosphate. Functionally, involved in mRNA degradation. Catalyzes the phosphorolysis of single-stranded polyribonucleotides processively in the 3'- to 5'-direction. The sequence is that of Polyribonucleotide nucleotidyltransferase from Glaesserella parasuis serovar 5 (strain SH0165) (Haemophilus parasuis).